The chain runs to 414 residues: Mannan endo-1,4-beta-mannosidase 2 (414 aa).

An N-terminal signal peptide occupies residues 1–25 (MAYFQRLISCIFVLFLLSLAFACEA). Positions 95 and 210 each coordinate substrate. Residue Glu211 is the Proton donor of the active site. Residue Tyr288 coordinates substrate. Residue Glu328 is the Nucleophile of the active site. Residue Trp370 participates in substrate binding.

It belongs to the glycosyl hydrolase 5 (cellulase A) family.

The protein localises to the secreted. It carries out the reaction Random hydrolysis of (1-&gt;4)-beta-D-mannosidic linkages in mannans, galactomannans and glucomannans.. In terms of biological role, possesses endo-beta-mannanase activity in vitro. May be involved in seed germination by weakening the endosperm cap prior to radicle emergence. The chain is Mannan endo-1,4-beta-mannosidase 2 (MAN2) from Solanum lycopersicum (Tomato).